The sequence spans 140 residues: Nucleoside diphosphate kinase (140 aa).

Lys-11, Phe-59, Arg-87, Thr-93, Arg-104, and Asn-114 together coordinate ATP. The active-site Pros-phosphohistidine intermediate is His-117.

The protein belongs to the NDK family. Homotetramer. It depends on Mg(2+) as a cofactor.

It is found in the cytoplasm. The catalysed reaction is a 2'-deoxyribonucleoside 5'-diphosphate + ATP = a 2'-deoxyribonucleoside 5'-triphosphate + ADP. It carries out the reaction a ribonucleoside 5'-diphosphate + ATP = a ribonucleoside 5'-triphosphate + ADP. Functionally, major role in the synthesis of nucleoside triphosphates other than ATP. The ATP gamma phosphate is transferred to the NDP beta phosphate via a ping-pong mechanism, using a phosphorylated active-site intermediate. The sequence is that of Nucleoside diphosphate kinase from Rhodovulum sulfidophilum (Rhodobacter sulfidophilus).